Consider the following 165-residue polypeptide: AP-3 complex subunit sigma (165 aa).

It belongs to the adaptor complexes small subunit family. Adaptor protein complex 3 (AP-3) is a heterotetramer composed of 2 large adaptins (apl5 and apl6), a medium adaptin (apm3) and a small adaptin (aps3).

The protein localises to the golgi apparatus. It localises to the cytoplasmic vesicle membrane. Functionally, part of the AP-3 complex, an adaptor-related complex which is not clathrin-associated. The complex is associated with the Golgi region as well as more peripheral structures. It facilitates the budding of vesicles from the Golgi membrane and may be directly involved in trafficking to the vacuole. This Schizosaccharomyces pombe (strain 972 / ATCC 24843) (Fission yeast) protein is AP-3 complex subunit sigma (aps3).